The sequence spans 688 residues: Probable xyloglucan glycosyltransferase 7 (688 aa).

Residues 1-25 are disordered; that stretch reads MAPSWWGRSGGGGVGNGGGTPVVVK. Positions 8 to 20 are enriched in gly residues; it reads RSGGGGVGNGGGT. 2 helical membrane-spanning segments follow: residues 121 to 141 and 183 to 203; these read VSLV…LQGW and VALF…CFWI. Aspartate 269 is an active-site residue. Residues aspartate 328 and aspartate 330 each coordinate substrate. Residue aspartate 422 is part of the active site. 2 consecutive transmembrane segments (helical) span residues 500–520 and 525–545; these read LILP…TMFV and LPAW…ILPA. The disordered stretch occupies residues 604–635; it reads HSKQQRVGSAPNLDALTKEESNPKKDSKKKKH. Positions 619-628 are enriched in basic and acidic residues; the sequence is LTKEESNPKK. 2 helical membrane passes run 638 to 657 and 663 to 683; these read IYRK…ARSL and IHFY…LDLI.

Belongs to the glycosyltransferase 2 family. Plant cellulose synthase-like C subfamily.

The protein localises to the golgi apparatus membrane. In terms of biological role, probable beta-1,4-glucan synthase rather involved in the synthesis of the xyloglucan backbone than cellulose. Seems to work simultaneously with xyloglucan 6-xylosyltransferase. Xyloglucan is a noncellulosic polysaccharides of plant cell wall and consists of a glucan backbone substituted by xylose, galactose and fucose. This chain is Probable xyloglucan glycosyltransferase 7 (CSLC7), found in Oryza sativa subsp. japonica (Rice).